A 260-amino-acid chain; its full sequence is MERLENCAQMFQRKFLNEAFRRHCPVLLACIALGGSLLKELSPLPDSYWNNKRNVLNVYFVKFCWGWTLWLLLPFITLTNYKLTGSITKVLRRLSSLLVGTLFWYLCTNLFLYIEHITGSCYESEALLDSIEHQDRKECRLHGGFWHGFDISGHCFLLSYCILIILEETSVIRSIQFERHWHRMAINAQFTALSILVIIWVWMFLCTAVYFHNIFQKVIGTAFGMLAWYITYRWWYLQPISPGLPPASASHSEKEPVYKN.

The Cytoplasmic segment spans residues 1-23 (MERLENCAQMFQRKFLNEAFRRH). A helical membrane pass occupies residues 24–44 (CPVLLACIALGGSLLKELSPL). Residues 45 to 57 (PDSYWNNKRNVLN) lie on the Lumenal side of the membrane. A helical membrane pass occupies residues 58–78 (VYFVKFCWGWTLWLLLPFITL). Residues 79-93 (TNYKLTGSITKVLRR) are Cytoplasmic-facing. Residues 94-114 (LSSLLVGTLFWYLCTNLFLYI) form a helical membrane-spanning segment. Residues 115 to 144 (EHITGSCYESEALLDSIEHQDRKECRLHGG) lie on the Lumenal side of the membrane. The chain crosses the membrane as a helical span at residues 145–165 (FWHGFDISGHCFLLSYCILII). The active site involves histidine 154. Topologically, residues 166–189 (LEETSVIRSIQFERHWHRMAINAQ) are cytoplasmic. 2 helical membrane-spanning segments follow: residues 190–210 (FTALSILVIIWVWMFLCTAVY) and 211–231 (FHNIFQKVIGTAFGMLAWYIT). The active site involves histidine 212. At 232–260 (YRWWYLQPISPGLPPASASHSEKEPVYKN) the chain is on the cytoplasmic side.

The protein belongs to the FIT family. FIT2 subfamily.

It is found in the endoplasmic reticulum membrane. The catalysed reaction is an acyl-CoA + H2O = an acyl-4'-phosphopantetheine + adenosine 3',5'-bisphosphate + 2 H(+). Its function is as follows. Fatty acyl-coenzyme A (CoA) diphosphatase that hydrolyzes fatty acyl-CoA to yield acyl-4'-phosphopantetheine and adenosine 3',5'-bisphosphate. Preferentially hydrolyzes unsaturated long-chain acyl-CoA substrates in the endoplasmic reticulum (ER) lumen. This catalytic activity is required for maintaining ER structure and for lipid droplets (LDs) biogenesis, which are lipid storage organelles involved in maintaining lipid and energy homeostasis. May directly bind to diacylglycerol (DAGs) and triacylglycerol, which is also important for LD biogenesis. May support directional budding of nacent LDs from the ER into the cytosol by reducing DAG levels at sites of LD formation. May play a role in the regulation of cell morphology, ER morphology and cytoskeletal organization. This chain is Acyl-coenzyme A diphosphatase FITM2, found in Xenopus laevis (African clawed frog).